A 398-amino-acid chain; its full sequence is Cathepsin E (398 aa).

A signal peptide spans 1 to 21 (MKPLFVLLLLLLLLDLAQAQG). Positions 22 to 58 (VLHRVPLRRHQSLRKKLRAQGQLSDFWRSHNLDMIEF) are cleaved as a propeptide — activation peptide. Residues 80 to 394 (YFGTVSIGSP…DRGNNQVGLA (315 aa)) form the Peptidase A1 domain. N-linked (GlcNAc...) asparagine glycosylation is present at N92. D98 is a catalytic residue. Intrachain disulfides connect C111/C116 and C274/C278. Residue D283 is part of the active site.

The protein belongs to the peptidase A1 family. Homodimer; disulfide-linked. Post-translationally, glycosylated. The nature of the carbohydrate chain varies between cell types. In brain microglia, the proenzyme contains a high mannose-type oligosaccharide, while the mature enzyme contains a complex-type oligosaccharide. In stomach and spleen, the mature enzyme contains a high mannose-type oligosaccharide. In erythrocyte membranes, the mature enzyme contains a complex-type oligosaccharide. Expressed abundantly in lymphocytes and macrophages of the thymus and spleen, and in the M cells of the intestine. In the brain, expression is limited to reactive microglial cells, the large pyrimidial neurons in the cerebral cortex, the CA1 and CA3 pyrimidial neurons of the hippocampus, the large neurons of the neostriatum, and the Purkinje neurons of the cerebellum.

The protein localises to the endosome. It catalyses the reaction Similar to cathepsin D, but slightly broader specificity.. May have a role in immune function. Probably involved in the processing of antigenic peptides during MHC class II-mediated antigen presentation. May play a role in activation-induced lymphocyte depletion in the thymus, and in neuronal degeneration and glial cell activation in the brain. The polypeptide is Cathepsin E (Ctse) (Rattus norvegicus (Rat)).